Reading from the N-terminus, the 478-residue chain is Uronate isomerase (478 aa).

The protein belongs to the metallo-dependent hydrolases superfamily. Uronate isomerase family.

It carries out the reaction D-glucuronate = D-fructuronate. It catalyses the reaction aldehydo-D-galacturonate = keto-D-tagaturonate. It functions in the pathway carbohydrate metabolism; pentose and glucuronate interconversion. The chain is Uronate isomerase from Bacillus pumilus (strain SAFR-032).